A 155-amino-acid chain; its full sequence is Myelin basic protein (155 aa).

Residues 1 to 72 are disordered; the sequence is MASATTSDHA…HQGARRQTDD (72 aa). Position 2 is an N-acetylalanine; in forms C1, C2, C3 and C8 (Ala-2). Gln-12 is subject to Deamidated glutamine; in forms C1, C2 and C3. A compositionally biased stretch (basic and acidic residues) spans 37 to 49; it reads GSRKVPEKGKEPA. Ser-73 and Ser-84 each carry phosphoserine; in forms C1, C2 and C3. The disordered stretch occupies residues 113–155; sequence RAHYGAAGSSKSKDGFRGRRDGSGTLSSFFKMGKKGEGSPARR. 2 positions are modified to phosphoserine; in forms C1 and C3: Ser-121 and Ser-122. Basic and acidic residues predominate over residues 123-134; sequence KSKDGFRGRRDG. Residues Ser-135, Ser-139, and Ser-140 each carry the phosphoserine; in forms C1, C2 and C3 modification.

This sequence belongs to the myelin basic protein family. Several charge isomers are produced as a result of optional post-translational modifications, such as phosphorylation, deamidation and citrullination. Dogfish MBP contains four major components designated as C1, C2, C3 and C8. C1 and C3, but not C2 are phosphorylated at either Ser-121 or Ser-122; C2 is phosphorylated at 2 or 3 sites among Ser-135, Ser-139 and Ser-140. Hydroxyproline and citrulline are present but were not identified in either C1, C2 or C3, which suggests their presence in C8.

The protein localises to the myelin membrane. Its function is as follows. This protein may function to maintain proper structure of myelin. The protein is Myelin basic protein (MBP) of Squalus acanthias (Spiny dogfish).